Consider the following 208-residue polypeptide: Uracil phosphoribosyltransferase (208 aa).

5-phospho-alpha-D-ribose 1-diphosphate is bound by residues Arg-78, Arg-103, and 130-138 (DPMLATGGS). Uracil is bound by residues Ile-193 and 198–200 (GDA). Asp-199 lines the 5-phospho-alpha-D-ribose 1-diphosphate pocket.

The protein belongs to the UPRTase family. The cofactor is Mg(2+).

The enzyme catalyses UMP + diphosphate = 5-phospho-alpha-D-ribose 1-diphosphate + uracil. It participates in pyrimidine metabolism; UMP biosynthesis via salvage pathway; UMP from uracil: step 1/1. Allosterically activated by GTP. In terms of biological role, catalyzes the conversion of uracil and 5-phospho-alpha-D-ribose 1-diphosphate (PRPP) to UMP and diphosphate. This chain is Uracil phosphoribosyltransferase, found in Tolumonas auensis (strain DSM 9187 / NBRC 110442 / TA 4).